We begin with the raw amino-acid sequence, 500 residues long: Aldehyde dehydrogenase, mitochondrial (500 aa).

N6-acetyllysine occurs at positions 35, 56, 61, and 142. Residue Gly-245 to Gly-250 participates in NAD(+) binding. Residue Glu-268 is the Proton acceptor of the active site. Cys-302 functions as the Nucleophile in the catalytic mechanism. N6-acetyllysine occurs at positions 351, 358, 366, 390, 409, 411, 424, and 434.

It belongs to the aldehyde dehydrogenase family. In terms of assembly, homotetramer. In response to mitochondrial stress, the precursor protein is ubiquitinated by the SIFI complex in the cytoplasm before mitochondrial import, leading to its degradation. Within the SIFI complex, UBR4 initiates ubiquitin chain that are further elongated or branched by KCMF1.

It is found in the mitochondrion matrix. The enzyme catalyses an aldehyde + NAD(+) + H2O = a carboxylate + NADH + 2 H(+). It participates in alcohol metabolism; ethanol degradation; acetate from ethanol: step 2/2. Its function is as follows. Required for clearance of cellular formaldehyde, a cytotoxic and carcinogenic metabolite that induces DNA damage. The sequence is that of Aldehyde dehydrogenase, mitochondrial (ALDH2) from Mesocricetus auratus (Golden hamster).